We begin with the raw amino-acid sequence, 838 residues long: MPLSYQHFRKLLLLDDEAGPLEEELPRLADEGLNHRVAEDLNLGNPNVSIPWTHKVGNFTGLYSSTVPVFNPEWQPPSFPHIHLQEDIINRCQQYVGPLTVNEKRRLKLIMPARFYPNLTKYLPLDKGIKPYYPEHAVNHYFKTRHYLHTLWKAGILYKRETTRSASFCGSPYSWEQELQHQTSTRHGDESFCSQSSGILSRSPVGPCVRSQLKQSRLGLQPQQGSMARGKSGRSGSIRARVHPTTRRSFGVEPSGSGHIDNSASSASSCLHQSAVRKTAYSHLSTSKRQSSSGHAVEFHNIPPSSARSQSEGPIFSCWWLQFRNSKPCSDYCLTHIVNLLEDWGPCTEHGEHNIRIPRTPARVTGGVFLVDKNPHNTTESRLVVDFSQFSRGSTHVSWPKFAVPNLQSLTNLLSSNLSWLSLDVSAAFYHIPLHPAAMPHLLVGSSGLPRYVARLSSTSRNINYQHGTMQDLHDSCSRNLYVSLLLLYKTFGRKLHLYSHPIILGFRKIPMGVGLSPFLLAQFTSAICSVVRRAFPHCLAFSYMDDVVLGAKSVQHLESLFTSITNFLLSLGIHLNPNKTKRWGYSLNFMGYVIGSWGTLPQEHIVLKLKQCFRKLPVNRPIDWKVCQRIVGLLGFAAPFTQCGYPALMPLYACIQSKQAFTFSPTYKAFLCQQYLHLYPVARQRSGLCQVFADATPTGWGLAIGHRRMRGTFVAPLPIHTAELLAACFARSRSGAKLIGTDNSVVLSRKYTSFPWLLGCAANWILRGTSFVYVPSALNPADDPSRGRLGLYRPLLHLPFRPTTGRTSLYAVSPSVPSHLPSRVHFASPLHVAWRPP.

The segment at 1-177 (MPLSYQHFRK…FCGSPYSWEQ (177 aa)) is terminal protein domain (TP). Residues 178 to 341 (ELQHQTSTRH…YCLTHIVNLL (164 aa)) form a spacer region. Disordered regions lie at residues 215–238 (QSRL…SGSI) and 285–311 (STSK…RSQS). Over residues 285 to 294 (STSKRQSSSG) the composition is skewed to polar residues. A polymerase/reverse transcriptase domain (RT) region spans residues 342–685 (EDWGPCTEHG…YLHLYPVARQ (344 aa)). A Reverse transcriptase domain is found at 352–595 (EHNIRIPRTP…YSLNFMGYVI (244 aa)). Residues Asp424, Asp546, and Asp547 each coordinate Mg(2+).

This sequence belongs to the hepadnaviridae P protein family.

It carries out the reaction DNA(n) + a 2'-deoxyribonucleoside 5'-triphosphate = DNA(n+1) + diphosphate. The enzyme catalyses Endonucleolytic cleavage to 5'-phosphomonoester.. Activated by host HSP70 and HSP40 in vitro to be able to bind the epsilon loop of the pgRNA. Because deletion of the RNase H region renders the protein partly chaperone-independent, the chaperones may be needed indirectly to relieve occlusion of the RNA-binding site by this domain. Inhibited by several reverse-transcriptase inhibitors: Lamivudine, Adefovir and Entecavir. Functionally, multifunctional enzyme that converts the viral RNA genome into dsDNA in viral cytoplasmic capsids. This enzyme displays a DNA polymerase activity that can copy either DNA or RNA templates, and a ribonuclease H (RNase H) activity that cleaves the RNA strand of RNA-DNA heteroduplexes in a partially processive 3'- to 5'-endonucleasic mode. Neo-synthesized pregenomic RNA (pgRNA) are encapsidated together with the P protein, and reverse-transcribed inside the nucleocapsid. Initiation of reverse-transcription occurs first by binding the epsilon loop on the pgRNA genome, and is initiated by protein priming, thereby the 5'-end of (-)DNA is covalently linked to P protein. Partial (+)DNA is synthesized from the (-)DNA template and generates the relaxed circular DNA (RC-DNA) genome. After budding and infection, the RC-DNA migrates in the nucleus, and is converted into a plasmid-like covalently closed circular DNA (cccDNA). The activity of P protein does not seem to be necessary for cccDNA generation, and is presumably released from (+)DNA by host nuclear DNA repair machinery. The protein is Protein P of Homo sapiens (Human).